The sequence spans 286 residues: Cbb3-type cytochrome c oxidase subunit CcoP (286 aa).

Helical transmembrane passes span 11–31 and 62–82; these read FGLIAALVILVLTIYESSSLI and VGWIASFMCTIVWAFWYFFFG. Cytochrome c domains are found at residues 116–195 and 205–286; these read ELVD…MAEL and QLID…LSNR. Residues cysteine 129, cysteine 132, histidine 133, methionine 174, cysteine 219, cysteine 222, histidine 223, and methionine 264 each coordinate heme c.

The protein belongs to the CcoP / FixP family. In terms of assembly, component of the cbb3-type cytochrome c oxidase at least composed of CcoN, CcoO, CcoQ and CcoP. The cofactor is heme c.

Its subcellular location is the cell inner membrane. The protein operates within energy metabolism; oxidative phosphorylation. In terms of biological role, C-type cytochrome. Part of the cbb3-type cytochrome c oxidase complex. CcoP subunit is required for transferring electrons from donor cytochrome c via its heme groups to CcoO subunit. From there, electrons are shuttled to the catalytic binuclear center of CcoN subunit where oxygen reduction takes place. The complex also functions as a proton pump. The chain is Cbb3-type cytochrome c oxidase subunit CcoP from Helicobacter pylori (strain ATCC 700392 / 26695) (Campylobacter pylori).